We begin with the raw amino-acid sequence, 175 residues long: ATP synthase subunit delta (175 aa).

Belongs to the ATPase delta chain family. In terms of assembly, F-type ATPases have 2 components, F(1) - the catalytic core - and F(0) - the membrane proton channel. F(1) has five subunits: alpha(3), beta(3), gamma(1), delta(1), epsilon(1). F(0) has three main subunits: a(1), b(2) and c(10-14). The alpha and beta chains form an alternating ring which encloses part of the gamma chain. F(1) is attached to F(0) by a central stalk formed by the gamma and epsilon chains, while a peripheral stalk is formed by the delta and b chains.

The protein resides in the cell inner membrane. Its function is as follows. F(1)F(0) ATP synthase produces ATP from ADP in the presence of a proton or sodium gradient. F-type ATPases consist of two structural domains, F(1) containing the extramembraneous catalytic core and F(0) containing the membrane proton channel, linked together by a central stalk and a peripheral stalk. During catalysis, ATP synthesis in the catalytic domain of F(1) is coupled via a rotary mechanism of the central stalk subunits to proton translocation. Functionally, this protein is part of the stalk that links CF(0) to CF(1). It either transmits conformational changes from CF(0) to CF(1) or is implicated in proton conduction. The polypeptide is ATP synthase subunit delta (Xanthomonas axonopodis pv. citri (strain 306)).